Consider the following 252-residue polypeptide: Sugar fermentation stimulation protein homolog (252 aa).

It belongs to the SfsA family.

This is Sugar fermentation stimulation protein homolog from Picosynechococcus sp. (strain ATCC 27264 / PCC 7002 / PR-6) (Agmenellum quadruplicatum).